The chain runs to 258 residues: 6-phosphogluconolactonase (258 aa).

This sequence belongs to the glucosamine/galactosamine-6-phosphate isomerase family. 6-phosphogluconolactonase subfamily.

It carries out the reaction 6-phospho-D-glucono-1,5-lactone + H2O = 6-phospho-D-gluconate + H(+). The protein operates within carbohydrate degradation; pentose phosphate pathway; D-ribulose 5-phosphate from D-glucose 6-phosphate (oxidative stage): step 2/3. Functionally, hydrolysis of 6-phosphogluconolactone to 6-phosphogluconate. This is 6-phosphogluconolactonase (pgl) from Chlamydia pneumoniae (Chlamydophila pneumoniae).